Reading from the N-terminus, the 446-residue chain is Indoleacetamide hydrolase (446 aa).

Active-site charge relay system residues include Lys71 and Ser146. Catalysis depends on Ser170, which acts as the Acyl-ester intermediate.

It belongs to the amidase family.

It participates in plant hormone metabolism; auxin biosynthesis. Its function is as follows. Hydrolyzes indole-3-acetamide (IAM) into indole-3-acetic acid (IAA). This chain is Indoleacetamide hydrolase (iaaH), found in Pseudomonas syringae pv. syringae.